A 601-amino-acid polypeptide reads, in one-letter code: Putative helicase 7 (601 aa).

Residues 17 to 182 (QSFLMSDKNL…IIDAEIIKTD (166 aa)) form the Helicase ATP-binding domain. An ATP-binding site is contributed by 30–37 (APTGTGKS). Residues 129 to 132 (DEIH) carry the DEAH box motif. The Helicase C-terminal domain occupies 208 to 375 (LKEDFIKKMV…VLEDFLLALI (168 aa)).

In Saccharolobus islandicus (Sulfolobus islandicus), this protein is Putative helicase 7 (SIFV0007).